We begin with the raw amino-acid sequence, 132 residues long: MVMTDPIADFLTRIRNANQVKHEVLEVPASNIKKGIAEILKREGFIKNVEVIEDGKQGIIRVFLKYGQNGERVITNLKRVSKPGLRIYSKREDVPKVLNGLGIAIISTSEGLLTDKEARQKNVGGEVIAYVW.

Belongs to the universal ribosomal protein uS8 family. Part of the 30S ribosomal subunit. Contacts proteins S5 and S12.

In terms of biological role, one of the primary rRNA binding proteins, it binds directly to 16S rRNA central domain where it helps coordinate assembly of the platform of the 30S subunit. The polypeptide is Small ribosomal subunit protein uS8 (Streptococcus equi subsp. equi (strain 4047)).